The sequence spans 200 residues: Holliday junction branch migration complex subunit RuvA (200 aa).

The tract at residues 1–63 (MIASVRGVVT…EDSLTLYGFA (63 aa)) is domain I. A domain II region spans residues 64–142 (DDDAKALFEL…PVPVGADSAA (79 aa)). Residues 143-151 (GVTTGAWPE) form a flexible linker region. The segment at 151-200 (EQVRQALVGLGWTAAQADQAVTAVAETVDGAVPPVPVLLRQAIRLLGRTR) is domain III.

This sequence belongs to the RuvA family. In terms of assembly, homotetramer. Forms an RuvA(8)-RuvB(12)-Holliday junction (HJ) complex. HJ DNA is sandwiched between 2 RuvA tetramers; dsDNA enters through RuvA and exits via RuvB. An RuvB hexamer assembles on each DNA strand where it exits the tetramer. Each RuvB hexamer is contacted by two RuvA subunits (via domain III) on 2 adjacent RuvB subunits; this complex drives branch migration. In the full resolvosome a probable DNA-RuvA(4)-RuvB(12)-RuvC(2) complex forms which resolves the HJ.

Its subcellular location is the cytoplasm. Functionally, the RuvA-RuvB-RuvC complex processes Holliday junction (HJ) DNA during genetic recombination and DNA repair, while the RuvA-RuvB complex plays an important role in the rescue of blocked DNA replication forks via replication fork reversal (RFR). RuvA specifically binds to HJ cruciform DNA, conferring on it an open structure. The RuvB hexamer acts as an ATP-dependent pump, pulling dsDNA into and through the RuvAB complex. HJ branch migration allows RuvC to scan DNA until it finds its consensus sequence, where it cleaves and resolves the cruciform DNA. The polypeptide is Holliday junction branch migration complex subunit RuvA (Salinispora tropica (strain ATCC BAA-916 / DSM 44818 / JCM 13857 / NBRC 105044 / CNB-440)).